Reading from the N-terminus, the 733-residue chain is Two pore calcium channel protein 1 (733 aa).

Met1 carries the post-translational modification N-acetylmethionine. Residues 1–71 (MEDPLIGRDS…RYYFIFTRLD (71 aa)) are Cytoplasmic-facing. A helical membrane pass occupies residues 72-92 (LIWSLNYFALLFLNFFEQPLW). Residues 93–120 (CEKNPKPSCKDRDYYYLGELPYLTNAES) are Vacuolar-facing. Residues 121–141 (IIYEVITLAILLVHTFFPISY) form a helical membrane-spanning segment. The Cytoplasmic portion of the chain corresponds to 142-158 (EGSRIFWTSRLNLVKVA). A helical transmembrane segment spans residues 159-179 (CVVILFVDVLVDFLYLSPLAF). Asp180 is a topological domain (vacuolar). A helical; Voltage-sensor transmembrane segment spans residues 181–199 (FLPFRIAPYVRVIIFILSI). The Cytoplasmic portion of the chain corresponds to 200 to 218 (RELRDTLVLLSGMLGTYLN). Residues 219–239 (ILALWMLFLLFASWIAFVMFE) form a helical membrane-spanning segment. Residues 240-245 (DTQQGL) lie on the Vacuolar side of the membrane. The segment at residues 246-260 (TVFTSYGATLYQMFI) is an intramembrane region (pore-forming). Topologically, residues 261–282 (LFTTSNNPDVWIPAYKSSRWSS) are vacuolar. The helical transmembrane segment at 283-303 (VFFVLYVLIGVYFVTNLILAV) threads the bilayer. Residues 304-428 (VYDSFKEQLA…LSQQLRAFVR (125 aa)) lie on the Cytoplasmic side of the membrane. EF-hand domains lie at 322 to 357 (MKRRMLEKAFGLIDSDKNGEIDKNQCIKLFEQLTNY) and 363 to 398 (ISKEEFGLIFDELDDTRDFKINKDEFADLCQAIALR). A helical transmembrane segment spans residues 429–449 (SPNFGYAISFILIINFIAVVV). Residues 450–465 (ETTLDIEESSAQKPWQ) lie on the Vacuolar side of the membrane. A helical transmembrane segment spans residues 466–486 (VAEFVFGWIYVLEMALKIYTY). Residues 487-498 (GFENYWREGANR) lie on the Cytoplasmic side of the membrane. The chain crosses the membrane as a helical span at residues 499 to 519 (FDFLVTWVIVIGETATFITPD). The Vacuolar portion of the chain corresponds to 520–528 (ENTFFSNGE). Residues 529-546 (WIRYLLLARMLRLIRLLM) traverse the membrane as a helical; Voltage-sensor segment. Over 547–557 (NVQRYRAFIAT) the chain is Cytoplasmic. A helical transmembrane segment spans residues 558–578 (FITLIPSLMPYLGTIFCVLCI). The Vacuolar segment spans residues 579 to 615 (YCSIGVQVFGGLVNAGNKKLFETELAEDDYLLFNFND). The pore-forming intramembrane region spans 616–630 (YPNGMVTLFNLLVMG). Residues 631 to 651 (NWQVWMESYKDLTGTWWSITY) lie on the Vacuolar side of the membrane. A helical membrane pass occupies residues 652-672 (FVSFYVITILLLLNLVVAFVL). Over 673 to 733 (EAFFTELDLE…SKPECSTSDT (61 aa)) the chain is Cytoplasmic. Over residues 686-695 (KCQGQDSQEK) the composition is skewed to basic and acidic residues. The tract at residues 686 to 711 (KCQGQDSQEKRNRRRSAGSKSRSQRV) is disordered.

Belongs to the calcium channel alpha-1 subunit (TC 1.A.1.11) family. Two pore calcium channel subfamily. In terms of assembly, homodimer. In terms of tissue distribution, ubiquitously expressed.

Its subcellular location is the vacuole membrane. Inhibited by Al(3+). Its function is as follows. Functions as a voltage-gated inward-rectifying Ca(2+) channel (VDCC) across the vacuole membrane. Is one of the essential components of the slow vacuolar (SV) channel. Acts as the major ROS-responsive Ca(2+) channel and is the possible target of Al-dependent inhibition. Involved in the regulation of germination and stomatal movement. The protein is Two pore calcium channel protein 1 (TPC1) of Arabidopsis thaliana (Mouse-ear cress).